The primary structure comprises 424 residues: CinA-like protein (424 aa).

It belongs to the CinA family.

The protein is CinA-like protein of Shewanella baltica (strain OS155 / ATCC BAA-1091).